Reading from the N-terminus, the 67-residue chain is DNA-directed RNA polymerase subunit omega (67 aa).

The protein belongs to the RNA polymerase subunit omega family. In terms of assembly, the RNAP catalytic core consists of 2 alpha, 1 beta, 1 beta' and 1 omega subunit. When a sigma factor is associated with the core the holoenzyme is formed, which can initiate transcription.

It catalyses the reaction RNA(n) + a ribonucleoside 5'-triphosphate = RNA(n+1) + diphosphate. Its function is as follows. Promotes RNA polymerase assembly. Latches the N- and C-terminal regions of the beta' subunit thereby facilitating its interaction with the beta and alpha subunits. This Burkholderia pseudomallei (strain 1106a) protein is DNA-directed RNA polymerase subunit omega.